The following is a 466-amino-acid chain: Asparagine--tRNA ligase (466 aa).

This sequence belongs to the class-II aminoacyl-tRNA synthetase family. As to quaternary structure, homodimer.

The protein localises to the cytoplasm. It catalyses the reaction tRNA(Asn) + L-asparagine + ATP = L-asparaginyl-tRNA(Asn) + AMP + diphosphate + H(+). The sequence is that of Asparagine--tRNA ligase from Serratia proteamaculans (strain 568).